The chain runs to 457 residues: tRNA-2-methylthio-N(6)-dimethylallyladenosine synthase (457 aa).

Residues 3–120 (KKVYVKTFGC…LPQMIDARRT (118 aa)) enclose the MTTase N-terminal domain. Residues cysteine 12, cysteine 49, cysteine 83, cysteine 157, cysteine 161, and cysteine 164 each coordinate [4Fe-4S] cluster. The Radical SAM core domain occupies 143–377 (RVEGPTAFVS…QATIEENVAR (235 aa)). The 68-residue stretch at 380–447 (QSMVGKVERI…PHSLRGELVL (68 aa)) folds into the TRAM domain.

It belongs to the methylthiotransferase family. MiaB subfamily. In terms of assembly, monomer. [4Fe-4S] cluster serves as cofactor.

It localises to the cytoplasm. It carries out the reaction N(6)-dimethylallyladenosine(37) in tRNA + (sulfur carrier)-SH + AH2 + 2 S-adenosyl-L-methionine = 2-methylsulfanyl-N(6)-dimethylallyladenosine(37) in tRNA + (sulfur carrier)-H + 5'-deoxyadenosine + L-methionine + A + S-adenosyl-L-homocysteine + 2 H(+). Functionally, catalyzes the methylthiolation of N6-(dimethylallyl)adenosine (i(6)A), leading to the formation of 2-methylthio-N6-(dimethylallyl)adenosine (ms(2)i(6)A) at position 37 in tRNAs that read codons beginning with uridine. The polypeptide is tRNA-2-methylthio-N(6)-dimethylallyladenosine synthase (Burkholderia multivorans (strain ATCC 17616 / 249)).